We begin with the raw amino-acid sequence, 283 residues long: Ubiquinone biosynthesis protein COQ4, mitochondrial (283 aa).

Residues 1-25 (MAIAKSVRARAVGLRSLRVLCAQRS) constitute a mitochondrion transit peptide. 4 residues coordinate Zn(2+): H166, D167, H170, and E182.

The protein belongs to the COQ4 family. In terms of assembly, component of a multi-subunit COQ enzyme complex, composed of at least COQ3, COQ4, COQ5, COQ6, COQ7 and COQ9. It depends on Zn(2+) as a cofactor.

The protein localises to the mitochondrion inner membrane. The catalysed reaction is a 4-hydroxy-3-methoxy-5-(all-trans-polyprenyl)benzoate + H(+) = a 2-methoxy-6-(all-trans-polyprenyl)phenol + CO2. It functions in the pathway cofactor biosynthesis; ubiquinone biosynthesis. Its function is as follows. Lyase that catalyzes the C1-decarboxylation of 4-hydroxy-3-methoxy-5-(all-trans-polyprenyl)benzoic acid into 2-methoxy-6-(all-trans-polyprenyl)phenol during ubiquinone biosynthesis. The polypeptide is Ubiquinone biosynthesis protein COQ4, mitochondrial (Coccidioides immitis (strain RS) (Valley fever fungus)).